A 699-amino-acid chain; its full sequence is Ecdysone-inducible protein E75 (699 aa).

Residues 1–31 (MTLVMSPDSSYGRYDAPTPTDVTSPVHRERE) form a disordered region. Residues 42-118 (TVLCRVCGDK…VGMSRDAVRF (77 aa)) constitute a DNA-binding region (nuclear receptor). NR C4-type zinc fingers lie at residues 45–65 (CRVC…CEGC) and 82–106 (CTKN…LKKC). The region spanning 152-399 (DAPRLLARVV…QQMWSEEEAV (248 aa)) is the NR LBD domain. Disordered stretches follow at residues 466–528 (TVTP…DDMP), 561–607 (RRDT…STHS), and 679–699 (LNLS…MLEA). Composition is skewed to basic and acidic residues over residues 510 to 520 (SLEEHNEDRRP) and 561 to 571 (RRDTGEAEART). Over residues 575 to 588 (TPSPQPQHPHPANP) the composition is skewed to pro residues.

This sequence belongs to the nuclear hormone receptor family. NR1 subfamily.

Its subcellular location is the nucleus. Implicated in the regulation of ecdysone-triggered gene hierarchies. Probably plays a key role in mediating the regulation of the larval molt by 20-OH-ecdysone. The sequence is that of Ecdysone-inducible protein E75 (E75) from Manduca sexta (Tobacco hawkmoth).